The chain runs to 354 residues: Uroporphyrinogen decarboxylase (354 aa).

Substrate contacts are provided by residues 30-34 (RQAGR), Asp79, Tyr154, Ser209, and His333.

This sequence belongs to the uroporphyrinogen decarboxylase family. In terms of assembly, homodimer.

It is found in the cytoplasm. It catalyses the reaction uroporphyrinogen III + 4 H(+) = coproporphyrinogen III + 4 CO2. It participates in porphyrin-containing compound metabolism; protoporphyrin-IX biosynthesis; coproporphyrinogen-III from 5-aminolevulinate: step 4/4. Functionally, catalyzes the decarboxylation of four acetate groups of uroporphyrinogen-III to yield coproporphyrinogen-III. The sequence is that of Uroporphyrinogen decarboxylase from Mycolicibacterium vanbaalenii (strain DSM 7251 / JCM 13017 / BCRC 16820 / KCTC 9966 / NRRL B-24157 / PYR-1) (Mycobacterium vanbaalenii).